We begin with the raw amino-acid sequence, 189 residues long: MTEYKLVVVGAGGVGKSALTIQLIQNHFVDEYDPTIEDSYRKQVVIDGETCLLDILDTAGQEEYSAMRDQYMRTGEGFLCVFAINNTKSFEDIHHYREQIKRVKDSEDVPMVLVGNKCDLPSRTVDTKQAQDLARSYGIPFIETSAKTRQRVEDAFYTLVREIRQYRLKKISKEEKTPGCVKIKKCIIM.

Met-1 bears the N-acetylmethionine; in GTPase KRas; alternate mark. The residue at position 2 (Thr-2) is an N-acetylthreonine; in GTPase KRas, N-terminally processed. GTP is bound by residues 10–18 (GAGGVGKSA), 29–35 (VDEYDPT), and 59–60 (AG). The Effector region motif lies at 32 to 40 (YDPTIEDSY). A (Microbial infection) O-linked (Glc) threonine; by P.sordellii toxin TcsL glycan is attached at Thr-35. Lys-104 carries the post-translational modification N6-acetyllysine. A GTP-binding site is contributed by 116 to 119 (NKCD). Residues 166–185 (YRLKKISKEEKTPGCVKIKK) are hypervariable region. A Glycyl lysine isopeptide (Lys-Gly) (interchain with G-Cter in ubiquitin) cross-link involves residue Lys-170. The S-palmitoyl cysteine moiety is linked to residue Cys-180. 3 N6-palmitoyl lysine lipidation sites follow: Lys-182, Lys-184, and Lys-185. The residue at position 186 (Cys-186) is a Cysteine methyl ester. A lipid anchor (S-farnesyl cysteine) is attached at Cys-186. Residues 187-189 (IIM) constitute a propeptide, removed in mature form.

The protein belongs to the small GTPase superfamily. Ras family. As to quaternary structure, interacts with PHLPP. Interacts (active GTP-bound form preferentially) with RGS14. Interacts (when farnesylated) with PDE6D; this promotes dissociation from the cell membrane. Interacts with SOS1. Interacts (when farnesylated) with GPR31. Interacts with RAP1GDS1. Interacts (active GTP-bound form) with both SHOC2 and PP1c (all isoforms) to form a tertiary complex; SHOC2 and PP1c preferably bind M-Ras/MRAS, but they also bind K-Ras/KRAS, N-Ras/NRAS and H-Ras/HRAS. Interacts (GTP-bound form) with MAPKAP1/SIN1; inhibiting K-Ras/KRAS activity. In terms of assembly, interacts with GPR31; in a farnelysation-dependent manner. In terms of processing, acetylation at Lys-104 prevents interaction with guanine nucleotide exchange factors (GEFs). Palmitoylated at Lys-182, Lys-184 and Lys-185. Palmitoylation on lysine residues is promoted by palmitoylation at Cys-180. Lysine-depalmitoylation by SIRT2 promotes its localization to endomembranes in endocytic pathways. Post-translationally, ubiquitinated by the BCR(LZTR1) E3 ubiquitin ligase complex at Lys-170 in a non-degradative manner, leading to inhibit Ras signaling by decreasing Ras association with membranes. In terms of processing, (Microbial infection) Glucosylated at Thr-35 by P.sordellii toxin TcsL.

The protein localises to the cell membrane. It localises to the endomembrane system. Its subcellular location is the cytoplasm. The protein resides in the cytosol. It carries out the reaction GTP + H2O = GDP + phosphate + H(+). Alternates between an inactive form bound to GDP and an active form bound to GTP. Activated by a guanine nucleotide-exchange factor (GEF) and inactivated by a GTPase-activating protein (GAP). Interaction with SOS1 promotes exchange of bound GDP to GTP. In terms of biological role, ras proteins bind GDP/GTP and possess intrinsic GTPase activity. Plays an important role in the regulation of cell proliferation. Plays a role in promoting oncogenic events by inducing transcriptional silencing of tumor suppressor genes (TSGs) in colorectal cancer (CRC) cells in a ZNF304-dependent manner. The protein is GTPase KRas (KRAS) of Homo sapiens (Human).